The primary structure comprises 221 residues: CASP-like protein 2U10 (221 aa).

Positions 1 to 22 (MDSSSKPMNGSAGGSPVGDERK) are disordered. The Cytoplasmic segment spans residues 1–31 (MDSSSKPMNGSAGGSPVGDERKMGDHEHEFR). A helical membrane pass occupies residues 32 to 52 (ISIILLRSFLLVLVIISEALM). Residues 53–91 (VTDRETGSVPLPFFGLPRPVFVTKTAKYELVTGLKFYVD) lie on the Extracellular side of the membrane. A helical membrane pass occupies residues 92 to 112 (ALGVVIGYTVLHLLFNIGLVA). At 113-122 (TKGTVVDCKS) the chain is on the cytoplasmic side. The chain crosses the membrane as a helical span at residues 123-143 (VAWISFIADSMMGYLLLSSAA). At 144-174 (VATEIGYLAEEGAPAVLWRKVCNAFGYFCTV) the chain is on the extracellular side. A helical transmembrane segment spans residues 175–195 (YAISVVICFIAALVSFVVVGI). The Cytoplasmic portion of the chain corresponds to 196–221 (SAYHLFRLYGIQQQAAREKEKLSAEM).

Belongs to the Casparian strip membrane proteins (CASP) family. Homodimer and heterodimers.

The protein resides in the cell membrane. The chain is CASP-like protein 2U10 from Selaginella moellendorffii (Spikemoss).